We begin with the raw amino-acid sequence, 488 residues long: Germacrene A hydroxylase (488 aa).

Residues 1–6 (MELSIT) are Cytoplasmic-facing. A helical; Signal-anchor for type II membrane protein membrane pass occupies residues 7-23 (TSIALATIVFFLYKLAT). Residues 24–488 (RPKSTKKQLP…KTELLLVPSF (465 aa)) are Lumenal-facing. 3 N-linked (GlcNAc...) asparagine glycosylation sites follow: asparagine 169, asparagine 260, and asparagine 379. Heme is bound at residue cysteine 432.

This sequence belongs to the cytochrome P450 family. Heme serves as cofactor.

It is found in the endoplasmic reticulum membrane. It carries out the reaction (+)-(R)-germacrene A + 3 reduced [NADPH--hemoprotein reductase] + 3 O2 = germacra-1(10),4,11(13)-trien-12-oate + 3 oxidized [NADPH--hemoprotein reductase] + 4 H2O + 4 H(+). Its pathway is secondary metabolite biosynthesis; terpenoid biosynthesis. Its function is as follows. Involved in the biosynthesis of germacrene-derived sesquiterpene lactones. Catalyzes three consecutive oxidations of germacrene A to produce germacrene A acid. Could also catalyze the three-step oxidation of non-natural substrate amorphadiene to artemisinic acid. This Lactuca sativa (Garden lettuce) protein is Germacrene A hydroxylase.